The following is a 109-amino-acid chain: DNA-binding protein MJ0691 (109 aa).

It belongs to the PDCD5 family.

The chain is DNA-binding protein MJ0691 from Methanocaldococcus jannaschii (strain ATCC 43067 / DSM 2661 / JAL-1 / JCM 10045 / NBRC 100440) (Methanococcus jannaschii).